Consider the following 185-residue polypeptide: Elongation factor P (185 aa).

This sequence belongs to the elongation factor P family.

The protein resides in the cytoplasm. The protein operates within protein biosynthesis; polypeptide chain elongation. In terms of biological role, involved in peptide bond synthesis. Stimulates efficient translation and peptide-bond synthesis on native or reconstituted 70S ribosomes in vitro. Probably functions indirectly by altering the affinity of the ribosome for aminoacyl-tRNA, thus increasing their reactivity as acceptors for peptidyl transferase. The polypeptide is Elongation factor P (Caldicellulosiruptor saccharolyticus (strain ATCC 43494 / DSM 8903 / Tp8T 6331)).